The chain runs to 308 residues: Mycothiol acetyltransferase (308 aa).

Glu44 contacts 1D-myo-inositol 2-(L-cysteinylamino)-2-deoxy-alpha-D-glucopyranoside. An acetyl-CoA-binding site is contributed by 83–85 (AVV). The N-acetyltransferase domain maps to 161-308 (VRLRTYAGSA…DVAYGRPEGD (148 aa)). 3 residues coordinate 1D-myo-inositol 2-(L-cysteinylamino)-2-deoxy-alpha-D-glucopyranoside: Glu188, Lys230, and Glu238. Acetyl-CoA contacts are provided by residues 242-244 (VGV) and 249-255 (QGRGLGR). Tyr276 provides a ligand contact to 1D-myo-inositol 2-(L-cysteinylamino)-2-deoxy-alpha-D-glucopyranoside. 281–286 (NTAALH) is a binding site for acetyl-CoA.

The protein belongs to the acetyltransferase family. MshD subfamily. In terms of assembly, monomer.

The enzyme catalyses 1D-myo-inositol 2-(L-cysteinylamino)-2-deoxy-alpha-D-glucopyranoside + acetyl-CoA = mycothiol + CoA + H(+). Catalyzes the transfer of acetyl from acetyl-CoA to desacetylmycothiol (Cys-GlcN-Ins) to form mycothiol. The chain is Mycothiol acetyltransferase from Gordonia bronchialis (strain ATCC 25592 / DSM 43247 / BCRC 13721 / JCM 3198 / KCTC 3076 / NBRC 16047 / NCTC 10667) (Rhodococcus bronchialis).